Here is a 443-residue protein sequence, read N- to C-terminus: MEGIERENGCFHTFCPIASVAWLHRKIKDSFFLIVGTHTCAHFIQTALDVMVYAHSRFGFAVLEESDLVAASPTAELAKVVEDIKAEWQPKVIFLLSTCSCDILKLDLENSSKDLTIRFGFPVVPVQTSGLDRTFTQGEDAVLHALLPFVPKEDPKVAVVEEKKRSWFSFGKDEGNKASVPAAPTRNLVLVGAVTDSTTQQLQWELKQLGLERVDVFPSGDITNMPVINEHTVIVPLQPYLSDTLATLRRERGAKVLTTLLPIGPDGTARFLEAICAEFGLDASPVAEREAQTWRSLESQRALLRGKRIMFLGDNLLEIPLARFLTACGAEVVEAGTPYVHAKDLSEEIARLREKGVPIVESPNFSAQVERIDRLRPDLIVAGLGICNPLEAAGYTTAWSIEFTFAQIHGFVNAIDLIKLFVKPLLKRQALLEQGWTEAGWMS.

[4Fe-4S] cluster contacts are provided by Cys-15, Cys-40, and Cys-99.

This sequence belongs to the BchN/ChlN family. Protochlorophyllide reductase is composed of three subunits; BchL, BchN and BchB. Forms a heterotetramer of two BchB and two BchN subunits. Requires [4Fe-4S] cluster as cofactor.

It catalyses the reaction chlorophyllide a + oxidized 2[4Fe-4S]-[ferredoxin] + 2 ADP + 2 phosphate = protochlorophyllide a + reduced 2[4Fe-4S]-[ferredoxin] + 2 ATP + 2 H2O. Its pathway is porphyrin-containing compound metabolism; bacteriochlorophyll biosynthesis (light-independent). In terms of biological role, component of the dark-operative protochlorophyllide reductase (DPOR) that uses Mg-ATP and reduced ferredoxin to reduce ring D of protochlorophyllide (Pchlide) to form chlorophyllide a (Chlide). This reaction is light-independent. The NB-protein (BchN-BchB) is the catalytic component of the complex. This is Light-independent protochlorophyllide reductase subunit N from Heliobacterium modesticaldum (strain ATCC 51547 / Ice1).